A 273-amino-acid chain; its full sequence is MRAIWTGSIAFGLVNVPVKVYSATADHDIRFHQVHAKDNGRIRYKRVCEACGEVVDYRDLARAYESGDGQMVAITDDDIASLPEERSREIEVLEFVPAADVDPMMFDRSYFLEPDSKSSKSYVLLAKTLAETDRMAIVHFTLRNKTRLAALRVKDFGKREVMMVHTLLWPDEIRDPDFPVLDQKVEIKPAELKMAGQVVDSMADDFNPDRYHDTYQEQLQELIDTKLEGGQAFTAEDQPRLLDEPEDVSDLLAKLEASVKARSKANSNVPTPP.

The 184-residue stretch at 10 to 193 folds into the Ku domain; that stretch reads AFGLVNVPVK…KVEIKPAELK (184 aa). The segment at 111-273 is sufficient for interaction with LigD; the sequence is FLEPDSKSSK…KANSNVPTPP (163 aa).

The protein belongs to the prokaryotic Ku family. Homodimer. Interacts with LigD.

Its function is as follows. With LigD forms a non-homologous end joining (NHEJ) DNA repair enzyme, which repairs dsDNA breaks with reduced fidelity. Binds linear dsDNA with 5'- and 3'- overhangs but not closed circular dsDNA nor ssDNA. Recruits and stimulates the ligase activity of LigD. The chain is Non-homologous end joining protein Ku (mku) from Mycobacterium tuberculosis (strain CDC 1551 / Oshkosh).